Reading from the N-terminus, the 501-residue chain is Probable cytosol aminopeptidase (501 aa).

Lysine 268 and aspartate 273 together coordinate Mn(2+). Lysine 280 is a catalytic residue. 3 residues coordinate Mn(2+): aspartate 291, aspartate 350, and glutamate 352. Arginine 354 is an active-site residue.

The protein belongs to the peptidase M17 family. Mn(2+) is required as a cofactor.

Its subcellular location is the cytoplasm. The catalysed reaction is Release of an N-terminal amino acid, Xaa-|-Yaa-, in which Xaa is preferably Leu, but may be other amino acids including Pro although not Arg or Lys, and Yaa may be Pro. Amino acid amides and methyl esters are also readily hydrolyzed, but rates on arylamides are exceedingly low.. The enzyme catalyses Release of an N-terminal amino acid, preferentially leucine, but not glutamic or aspartic acids.. Its function is as follows. Presumably involved in the processing and regular turnover of intracellular proteins. Catalyzes the removal of unsubstituted N-terminal amino acids from various peptides. In Idiomarina loihiensis (strain ATCC BAA-735 / DSM 15497 / L2-TR), this protein is Probable cytosol aminopeptidase.